The following is a 397-amino-acid chain: Digeranylgeranylglycerophospholipid reductase (397 aa).

Ala15, Glu34, Cys45, Gly46, Gly48, Arg101, Ala125, Glu163, Asp284, Gly296, and Ile297 together coordinate FAD. A 2,3-bis-O-(geranylgeranyl)-sn-glycerol 1-phospholipid is bound by residues Lys339 and Val375.

Belongs to the geranylgeranyl reductase family. DGGGPL reductase subfamily. Requires FAD as cofactor.

The enzyme catalyses 2,3-bis-O-(phytanyl)-sn-glycerol 1-phosphate + 8 NADP(+) = 2,3-bis-O-(geranylgeranyl)-sn-glycerol 1-phosphate + 8 NADPH + 8 H(+). It catalyses the reaction 2,3-bis-O-(phytanyl)-sn-glycerol 1-phosphate + 8 NAD(+) = 2,3-bis-O-(geranylgeranyl)-sn-glycerol 1-phosphate + 8 NADH + 8 H(+). It carries out the reaction a 2,3-bis-O-phytanyl-sn-glycerol 1-phospholipid + 8 A = a 2,3-bis-O-(geranylgeranyl)-sn-glycerol 1-phospholipid + 8 AH2. The catalysed reaction is CDP-2,3-bis-O-(geranylgeranyl)-sn-glycerol + 8 AH2 = CDP-2,3-bis-O-(phytanyl)-sn-glycerol + 8 A. The enzyme catalyses archaetidylserine + 8 AH2 = 2,3-bis-O-phytanyl-sn-glycero-3-phospho-L-serine + 8 A. It participates in membrane lipid metabolism; glycerophospholipid metabolism. In terms of biological role, is involved in the reduction of 2,3-digeranylgeranylglycerophospholipids (unsaturated archaeols) into 2,3-diphytanylglycerophospholipids (saturated archaeols) in the biosynthesis of archaeal membrane lipids. Catalyzes the formation of archaetidic acid (2,3-di-O-phytanyl-sn-glyceryl phosphate) from 2,3-di-O-geranylgeranylglyceryl phosphate (DGGGP) via the hydrogenation of each double bond of the isoprenoid chains. Is also probably able to reduce double bonds of geranyl groups in CDP-2,3-bis-O-(geranylgeranyl)-sn-glycerol and archaetidylserine, thus acting at various stages in the biosynthesis of archaeal membrane lipids. The protein is Digeranylgeranylglycerophospholipid reductase of Picrophilus torridus (strain ATCC 700027 / DSM 9790 / JCM 10055 / NBRC 100828 / KAW 2/3).